A 235-amino-acid polypeptide reads, in one-letter code: 5'-methylthioadenosine/S-adenosylhomocysteine nucleosidase (235 aa).

Glu-12 functions as the Proton acceptor in the catalytic mechanism. Residues Gly-78, Met-153, and 174–175 (ME) each bind substrate. The active-site Proton donor is Asp-198.

The protein belongs to the PNP/UDP phosphorylase family. MtnN subfamily.

The catalysed reaction is S-adenosyl-L-homocysteine + H2O = S-(5-deoxy-D-ribos-5-yl)-L-homocysteine + adenine. It carries out the reaction S-methyl-5'-thioadenosine + H2O = 5-(methylsulfanyl)-D-ribose + adenine. It catalyses the reaction 5'-deoxyadenosine + H2O = 5-deoxy-D-ribose + adenine. The protein operates within amino-acid biosynthesis; L-methionine biosynthesis via salvage pathway; S-methyl-5-thio-alpha-D-ribose 1-phosphate from S-methyl-5'-thioadenosine (hydrolase route): step 1/2. Its function is as follows. Catalyzes the irreversible cleavage of the glycosidic bond in both 5'-methylthioadenosine (MTA) and S-adenosylhomocysteine (SAH/AdoHcy) to adenine and the corresponding thioribose, 5'-methylthioribose and S-ribosylhomocysteine, respectively. Also cleaves 5'-deoxyadenosine, a toxic by-product of radical S-adenosylmethionine (SAM) enzymes, into 5-deoxyribose and adenine. The sequence is that of 5'-methylthioadenosine/S-adenosylhomocysteine nucleosidase from Geobacillus kaustophilus (strain HTA426).